The following is a 452-amino-acid chain: GTPase Der (452 aa).

EngA-type G domains are found at residues 4–169 (PIVA…PPPE) and 177–352 (IKVA…EEHR). Residues 10-17 (GRPNVGKS), 57-61 (DTGGL), 120-123 (NKCE), 183-190 (GRPNVGKS), 230-234 (DTAGI), and 295-298 (NKWD) each bind GTP. A KH-like domain is found at 353 to 438 (RRVTTAVINE…PIRLLWRGKK (86 aa)).

The protein belongs to the TRAFAC class TrmE-Era-EngA-EngB-Septin-like GTPase superfamily. EngA (Der) GTPase family. In terms of assembly, associates with the 50S ribosomal subunit.

In terms of biological role, GTPase that plays an essential role in the late steps of ribosome biogenesis. In Rippkaea orientalis (strain PCC 8801 / RF-1) (Cyanothece sp. (strain PCC 8801)), this protein is GTPase Der.